Reading from the N-terminus, the 300-residue chain is Fatty acid elongase 3 (300 aa).

Helical transmembrane passes span 31-51 (VPAV…ENVM), 61-81 (FLNM…AYYC), and 127-147 (IFFD…KIPE). The HxxHH motif motif lies at 165 to 169 (HWYHH). The active-site Nucleophile is histidine 168. Transmembrane regions (helical) follow at residues 170–190 (ATVM…GLWF), 192–212 (TMNY…ACGM), 219–239 (IAPL…LIVL), and 261–283 (MGLL…SYIS).

The protein belongs to the ELO family.

It is found in the endoplasmic reticulum membrane. The enzyme catalyses an acyl-CoA + malonyl-CoA + H(+) = a 3-oxoacyl-CoA + CO2 + CoA. The protein operates within lipid metabolism; fatty acid biosynthesis. Functionally, involved in the synthesis of fatty acids. Elongates C14 fatty acids to C18. Required for the maintenance of the global lipidome profile in this parasite. This Trypanosoma cruzi (strain CL Brener) protein is Fatty acid elongase 3.